We begin with the raw amino-acid sequence, 434 residues long: Methylenetetrahydrofolate--tRNA-(uracil-5-)-methyltransferase TrmFO (434 aa).

An FAD-binding site is contributed by 10–15 (GAGLAG).

It belongs to the MnmG family. TrmFO subfamily. It depends on FAD as a cofactor.

The protein resides in the cytoplasm. It carries out the reaction uridine(54) in tRNA + (6R)-5,10-methylene-5,6,7,8-tetrahydrofolate + NADH + H(+) = 5-methyluridine(54) in tRNA + (6S)-5,6,7,8-tetrahydrofolate + NAD(+). The enzyme catalyses uridine(54) in tRNA + (6R)-5,10-methylene-5,6,7,8-tetrahydrofolate + NADPH + H(+) = 5-methyluridine(54) in tRNA + (6S)-5,6,7,8-tetrahydrofolate + NADP(+). Its function is as follows. Catalyzes the folate-dependent formation of 5-methyl-uridine at position 54 (M-5-U54) in all tRNAs. This is Methylenetetrahydrofolate--tRNA-(uracil-5-)-methyltransferase TrmFO from Bacillus cereus (strain G9842).